A 505-amino-acid polypeptide reads, in one-letter code: Serine carboxypeptidase-like 47 (505 aa).

The first 22 residues, 1–22 (MEAKTFFLFMLFIFSQSWLSTS), serve as a signal peptide directing secretion. N-linked (GlcNAc...) asparagine glycans are attached at residues asparagine 37, asparagine 86, and asparagine 122. Intrachain disulfides connect cysteine 138/cysteine 378, cysteine 306/cysteine 321, and cysteine 344/cysteine 349. Serine 228 is a catalytic residue. N-linked (GlcNAc...) asparagine glycosylation occurs at asparagine 301. Residue aspartate 416 is part of the active site. N-linked (GlcNAc...) asparagine glycosylation is found at asparagine 432 and asparagine 444. The active site involves histidine 473.

This sequence belongs to the peptidase S10 family. As to expression, expressed in roots, flowers and siliques.

It is found in the secreted. Probable carboxypeptidase. This is Serine carboxypeptidase-like 47 (SCPL47) from Arabidopsis thaliana (Mouse-ear cress).